Consider the following 331-residue polypeptide: Cysteine and histidine-rich domain-containing protein 1 (331 aa).

Ala2 carries the post-translational modification N-acetylalanine. The segment at 2–77 (ALLCYNRGCG…KPPEPVKPEV (76 aa)) is interaction with PPP5C. Residues Cys5, Cys10, Cys24, His27, Cys42, and Cys43 each coordinate Zn(2+). CHORD domains are found at residues 5-64 (CYNR…KGRH) and 157-216 (CKNG…RGKH). Residue Thr47 is modified to Phosphothreonine. The residue at position 51 (Ser51) is a Phosphoserine. Residues Cys59, His64, Cys157, Cys162, Cys176, His179, Cys194, Cys195, Cys211, and His216 each coordinate Zn(2+). Positions 62–82 (GRHNSEKPPEPVKPEVKTTEK) are disordered. The segment covering 64-82 (HNSEKPPEPVKPEVKTTEK) has biased composition (basic and acidic residues). An interaction with HSP90AA1 and HSP90AB1 region spans residues 65-316 (NSEKPPEPVK…AEPMQWASLE (252 aa)). A CS domain is found at 227 to 316 (VVPCRHDWHQ…AEPMQWASLE (90 aa)).

As to quaternary structure, interacts with HSP90AA1, HSP90AB1, PPP5C, ROCK1 and ROCK2.

Regulates centrosome duplication, probably by inhibiting the kinase activity of ROCK2. Proposed to act as co-chaperone for HSP90. May play a role in the regulation of NOD1 via a HSP90 chaperone complex. In vitro, has intrinsic chaperone activity. This function may be achieved by inhibiting association of ROCK2 with NPM1. Plays a role in ensuring the localization of the tyrosine kinase receptor EGFR to the plasma membrane, and thus ensures the subsequent regulation of EGFR activity and EGF-induced actin cytoskeleton remodeling. Involved in stress response. Prevents tumorigenesis. This Rattus norvegicus (Rat) protein is Cysteine and histidine-rich domain-containing protein 1 (Chordc1).